The sequence spans 55 residues: Large ribosomal subunit protein bL33 (55 aa).

Belongs to the bacterial ribosomal protein bL33 family.

The sequence is that of Large ribosomal subunit protein bL33 from Bradyrhizobium diazoefficiens (strain JCM 10833 / BCRC 13528 / IAM 13628 / NBRC 14792 / USDA 110).